We begin with the raw amino-acid sequence, 409 residues long: MASGKAAGKTDAPAPVIKLGGPKPPKVGSSGNASWFQAIKAKKLNTPPPKFEGSGVPDNENIKPSQQHGYWRRQARFKPGKGGRKPVPDAWYFYYTGTGPAADLNWGDTQDGIVWVAAKGADTKSRSNQGTRDPDKFDQYPLRFSDGGPDGNFRWDFIPLNRGRSGRSTAASSAAASRAPSREGSRGRRSDSGDDLIARAAKIIQDQQKKGSRITKAKADEMAHRRYCKRTIPPNYRVDQVFGPRTKGKEGNFGDDKMNEEGIKDGRVTAMLNLVPSSHACLFGSRVTPKLQLDGLHLRFEFTTVVPCDDPQFDNYVKICDQCVDGVGTRPKDDEPKPKSRSSSRPATRGNSPAPRQQRPKKEKKLKKQDDEADKALTSDEERNNAQLEFYDEPKVINWGDAALGENEL.

Disordered stretches follow at residues 1 to 84 and 121 to 194; these read MASG…KGGR and ADTK…DSGD. The span at 15 to 31 shows a compositional bias: low complexity; the sequence is PVIKLGGPKPPKVGSSG. The RNA-binding stretch occupies residues 29–160; it reads SSGNASWFQA…GNFRWDFIPL (132 aa). A CoV N NTD domain is found at 31-156; that stretch reads GNASWFQAIK…GGPDGNFRWD (126 aa). Positions 70–84 are enriched in basic residues; it reads YWRRQARFKPGKGGR. Positions 162-179 are enriched in low complexity; that stretch reads RGRSGRSTAASSAAASRA. Residues 180–192 show a composition bias toward basic and acidic residues; that stretch reads PSREGSRGRRSDS. Residues Ser-190 and Ser-192 each carry the phosphoserine; by host modification. A CoV N CTD domain is found at 215-331; it reads TKAKADEMAH…QCVDGVGTRP (117 aa). The segment at 226 to 333 is dimerization; that stretch reads RYCKRTIPPN…VDGVGTRPKD (108 aa). Cystine bridges form between Cys-281–Cys-308 and Cys-320–Cys-323. The interval 327–396 is disordered; it reads VGTRPKDDEP…QLEFYDEPKV (70 aa). The span at 358–367 shows a compositional bias: basic residues; sequence QRPKKEKKLK. The span at 368 to 384 shows a compositional bias: basic and acidic residues; the sequence is KQDDEADKALTSDEERN. Thr-378 bears the Phosphothreonine; by host mark. The residue at position 379 (Ser-379) is a Phosphoserine; by host.

The protein belongs to the gammacoronavirus nucleocapsid protein family. Homooligomer. Both monomeric and oligomeric forms interact with RNA. Interacts with protein M. Interacts with NSP3; this interaction serves to tether the genome to the newly translated replicase-transcriptase complex at a very early stage of infection. In terms of processing, ADP-ribosylated. The ADP-ribosylation is retained in the virion during infection. Phosphorylated on serine and threonine residues.

It is found in the virion. The protein resides in the host endoplasmic reticulum-Golgi intermediate compartment. Its subcellular location is the host Golgi apparatus. Packages the positive strand viral genome RNA into a helical ribonucleocapsid (RNP) and plays a fundamental role during virion assembly through its interactions with the viral genome and membrane protein M. Plays an important role in enhancing the efficiency of subgenomic viral RNA transcription as well as viral replication. This chain is Nucleoprotein, found in Gallus gallus (Chicken).